A 393-amino-acid chain; its full sequence is Alpha-pyrone synthesis polyketide synthase-like Pks18 (393 aa).

The segment at 1–26 (MNVSAESGAPRRAGQRHEVGLAQLPP) is disordered. Catalysis depends on Cys175, which acts as the Nucleophile. Substrate is bound at residue His221.

Belongs to the thiolase-like superfamily. Chalcone/stilbene synthases family. In terms of assembly, homodimer.

It participates in lipid metabolism; fatty acid biosynthesis. Functionally, involved in the biosynthesis of tri- and tetraketide alpha-pyrones. Pks18 catalyzes the extension of medium- and long-chain aliphatic acyl-CoA substrates by using malonyl-CoA as an extender molecule to synthesize polyketide products. This Mycobacterium bovis (strain ATCC BAA-935 / AF2122/97) protein is Alpha-pyrone synthesis polyketide synthase-like Pks18 (pks18).